A 267-amino-acid chain; its full sequence is Hydroxyethylthiazole kinase (267 aa).

Residue M46 participates in substrate binding. ATP-binding residues include R121 and T167. A194 is a binding site for substrate.

The protein belongs to the Thz kinase family. The cofactor is Mg(2+).

It carries out the reaction 5-(2-hydroxyethyl)-4-methylthiazole + ATP = 4-methyl-5-(2-phosphooxyethyl)-thiazole + ADP + H(+). The protein operates within cofactor biosynthesis; thiamine diphosphate biosynthesis; 4-methyl-5-(2-phosphoethyl)-thiazole from 5-(2-hydroxyethyl)-4-methylthiazole: step 1/1. Its function is as follows. Catalyzes the phosphorylation of the hydroxyl group of 4-methyl-5-beta-hydroxyethylthiazole (THZ). The chain is Hydroxyethylthiazole kinase from Rhizobium leguminosarum bv. trifolii (strain WSM2304).